The following is a 123-amino-acid chain: Ribonuclease P protein component (123 aa).

Belongs to the RnpA family. As to quaternary structure, consists of a catalytic RNA component (M1 or rnpB) and a protein subunit.

The enzyme catalyses Endonucleolytic cleavage of RNA, removing 5'-extranucleotides from tRNA precursor.. Functionally, RNaseP catalyzes the removal of the 5'-leader sequence from pre-tRNA to produce the mature 5'-terminus. It can also cleave other RNA substrates such as 4.5S RNA. The protein component plays an auxiliary but essential role in vivo by binding to the 5'-leader sequence and broadening the substrate specificity of the ribozyme. In Bordetella petrii (strain ATCC BAA-461 / DSM 12804 / CCUG 43448), this protein is Ribonuclease P protein component.